A 212-amino-acid chain; its full sequence is Minor capsid protein VP2 (212 aa).

The protein belongs to the norovirus VP2 family. Homooligomer. The portal-like structure consists in 12 copies of VP2. Interacts with capsid protein VP1.

The protein localises to the virion. Its subcellular location is the host cytoplasm. Minor structural protein that forms a portal-like structure at a unique three-fold axis of symmetry, following binding to the host receptor. The channel formed by VP2 may allow the delivery of the viral genome through the host endosomal membrane. The sequence is that of Minor capsid protein VP2 from Norovirus (strain Human/NoV/United States/Norwalk/1968/GI) (Hu/NV/NV/1968/US).